The primary structure comprises 326 residues: MDLDSMDCTSTMDVTDDEEIHQDRHSYASVSKHHHTNNNTTNVNAAASGLLPTTTSVHELLECPVCTNSMYPPIHQCHNGHTLCSTCKARVHNRCPTCRQELGDIRCLALEKVAESLELPCKHMSLGCPEIFPYYSKLKHETVCNFRPYSCPYAGSECSVTGDIPFLVAHLRDDHKVDMHSGCTFNHRYVKSNPREVENATWMLTVFHCFGQYFCLHFEAFQLGMAPVYMAFLRFMGDETEARNYNYSLEVGGYGRKLIWEGTPRSVRDSHRKVRDSHDGLIIQRNMALFFSGGDRKELKLRVTGRIWKEQQQSGEGGGACIPNLS.

The interval 1–44 is disordered; it reads MDLDSMDCTSTMDVTDDEEIHQDRHSYASVSKHHHTNNNTTNVN. An RING-type zinc finger spans residues 63-99; it reads CPVCTNSMYPPIHQCHNGHTLCSTCKARVHNRCPTCR. The interval 113–306 is SBD; it reads VAESLELPCK…KELKLRVTGR (194 aa). The SIAH-type zinc-finger motif lies at 116–176; that stretch reads SLELPCKHMS…LVAHLRDDHK (61 aa). Residues cysteine 121, cysteine 128, histidine 140, cysteine 144, cysteine 151, cysteine 158, histidine 170, and histidine 175 each coordinate Zn(2+).

The protein belongs to the SINA (Seven in absentia) family. In terms of assembly, interacts with SINAT6. Interacts with WAV3. Interacts with FREE1. Interacts with ELC/VPS23A.

The protein localises to the endosome. Its subcellular location is the multivesicular body. It is found in the cytoplasmic vesicle. It localises to the autophagosome. The catalysed reaction is S-ubiquitinyl-[E2 ubiquitin-conjugating enzyme]-L-cysteine + [acceptor protein]-L-lysine = [E2 ubiquitin-conjugating enzyme]-L-cysteine + N(6)-ubiquitinyl-[acceptor protein]-L-lysine.. Its pathway is protein modification; protein ubiquitination. In terms of biological role, E3 ubiquitin-protein ligase that mediates ubiquitination and subsequent proteasomal degradation of target proteins. E3 ubiquitin ligases accept ubiquitin from an E2 ubiquitin-conjugating enzyme in the form of a thioester and then directly transfers the ubiquitin to targeted substrates. It probably triggers the ubiquitin-mediated degradation of different substrates. Modulates directly the ubiquitination and proteasomal-dependent degradation of FREE1, a component of the ESCRT-I complex. Modulates directly the ubiquitination and proteasomal-dependent degradation of ELC/VPS23A, a component of the ESCRT-I complex. The polypeptide is E3 ubiquitin-protein ligase SINAT3 (Arabidopsis thaliana (Mouse-ear cress)).